A 146-amino-acid polypeptide reads, in one-letter code: Ribonuclease H (146 aa).

In terms of domain architecture, RNase H type-1 spans 4 to 145 (ELNKVVIYTD…ADMLARSQIV (142 aa)). Mg(2+) is bound by residues Asp-13, Glu-51, Asp-73, and Asp-137.

It belongs to the RNase H family. In terms of assembly, monomer. It depends on Mg(2+) as a cofactor.

The protein localises to the cytoplasm. The enzyme catalyses Endonucleolytic cleavage to 5'-phosphomonoester.. In terms of biological role, endonuclease that specifically degrades the RNA of RNA-DNA hybrids. The polypeptide is Ribonuclease H (Ehrlichia chaffeensis (strain ATCC CRL-10679 / Arkansas)).